The chain runs to 274 residues: 4-diphosphocytidyl-2-C-methyl-D-erythritol kinase (274 aa).

K8 is an active-site residue. 94-104 is a binding site for ATP; it reads PSGAGLGGGSS. Residue D136 is part of the active site.

Belongs to the GHMP kinase family. IspE subfamily.

The catalysed reaction is 4-CDP-2-C-methyl-D-erythritol + ATP = 4-CDP-2-C-methyl-D-erythritol 2-phosphate + ADP + H(+). It functions in the pathway isoprenoid biosynthesis; isopentenyl diphosphate biosynthesis via DXP pathway; isopentenyl diphosphate from 1-deoxy-D-xylulose 5-phosphate: step 3/6. In terms of biological role, catalyzes the phosphorylation of the position 2 hydroxy group of 4-diphosphocytidyl-2C-methyl-D-erythritol. The protein is 4-diphosphocytidyl-2-C-methyl-D-erythritol kinase of Bacteroides thetaiotaomicron (strain ATCC 29148 / DSM 2079 / JCM 5827 / CCUG 10774 / NCTC 10582 / VPI-5482 / E50).